The sequence spans 147 residues: Hemoglobin subunit epsilon (147 aa).

The Globin domain occupies 3-147 (HFTAEEKAAI…VAIALGHKYH (145 aa)). A phosphoserine mark is found at serine 14 and serine 51. Heme b is bound by residues histidine 64 and histidine 93.

The protein belongs to the globin family. As to quaternary structure, heterotetramer of two alpha chains and two epsilon chains in early embryonic hemoglobin Gower-2; two zeta chains and two epsilon chains in early embryonic hemoglobin Gower-1. As to expression, red blood cells.

In terms of biological role, the epsilon chain is a beta-type chain of early mammalian embryonic hemoglobin. This Saimiri boliviensis boliviensis (Bolivian squirrel monkey) protein is Hemoglobin subunit epsilon (HBE1).